A 485-amino-acid polypeptide reads, in one-letter code: Isocitrate dehydrogenase [NADP], chloroplastic/mitochondrial (485 aa).

A chloroplast and mitochondrion-targeting transit peptide spans 1–65; it reads MLNKLTHGVF…VQFHRASAVR (65 aa). NADP(+)-binding positions include 147–149 and arginine 154; that span reads TIT. Threonine 149 contacts substrate. Substrate contacts are provided by residues 166–172, arginine 181, and arginine 204; that span reads SPNGTIR. Aspartate 323 contacts Mn(2+). Lysine 331 contacts NADP(+). Aspartate 346 contributes to the Mn(2+) binding site. NADP(+)-binding positions include 381–386 and asparagine 399; that span reads GTVTRH.

It belongs to the isocitrate and isopropylmalate dehydrogenases family. Requires Mg(2+) as cofactor. The cofactor is Mn(2+).

It is found in the plastid. It localises to the chloroplast. The protein localises to the mitochondrion. The catalysed reaction is D-threo-isocitrate + NADP(+) = 2-oxoglutarate + CO2 + NADPH. May be involved in response to oxidative stresses. The chain is Isocitrate dehydrogenase [NADP], chloroplastic/mitochondrial from Arabidopsis thaliana (Mouse-ear cress).